The following is a 2282-amino-acid chain: Zonadhesin (2282 aa).

MAM domains are found at residues 1–147 (MFFA…PCGE) and 150–315 (PQCV…TCHV). Residues 1 to 2235 (MFFATGRASA…VLLPPKPDTS (2235 aa)) are Extracellular-facing. Asn-112 and Asn-272 each carry an N-linked (GlcNAc...) asparagine glycan. The 26 X approximate heptapeptide repeats (mucin-like domain) stretch occupies residues 315–498 (VPVPPVIPIK…STTTTPSPTT (184 aa)). Residues 333–356 (PTVPAEGTTEPPEGTIELPEGTTK) are compositionally biased toward low complexity. Residues 333-495 (PTVPAEGTTE…TTLSTTTTPS (163 aa)) are disordered. Positions 360–369 (ETTELPEEIT) are enriched in acidic residues. The segment covering 379–398 (TEPPTVPTEPPTVPTEPPTV) has biased composition (pro residues). Low complexity-rich tracts occupy residues 399–420 (PTEK…TSIP) and 427–495 (PTEK…TTPS). The region spanning 501-550 (CPANAHYESCACPASCKHPKASCKPPCQPGCVCDPGLVFSNNSCIKASSC) is the TIL 1 domain. N-linked (GlcNAc...) asparagine glycans are attached at residues Asn-541 and Asn-569. Residues 551 to 605 (PCLYNNNNYEPEAEWFSPNCTELCHCWPGGRIECQISQCKTHTKCQLKNGQYECQ) enclose the VWFC 1 domain. In terms of domain architecture, VWFD 1 spans 610 to 787 (ATCFVYGDPH…WAQDEDKECQ (178 aa)). 2 disulfide bridges follow: Cys-612-Cys-747 and Cys-634-Cys-786. One can recognise a TIL 2 domain in the interval 881–934 (CPPNSRYSLCTSPCPKTCHTGYVGMPCPEQCLEGCECNPGFILSGLECVPSAQC). Positions 935 to 990 (GCLDPSRGYFKVGEQWFKSDCKQLCICEGSNQIRCQPWKCGPHEVCSQQSGIYGCH) constitute a VWFC 2 domain. Positions 995-1176 (ATCSASGDPH…LEEGSETGCF (182 aa)) constitute a VWFD 2 domain. Cystine bridges form between Cys-997–Cys-1136 and Cys-1019–Cys-1175. Asn-1141, Asn-1259, Asn-1270, Asn-1355, Asn-1467, and Asn-1483 each carry an N-linked (GlcNAc...) asparagine glycan. One can recognise a TIL 3 domain in the interval 1267 to 1322 (CPPNSSYSPCGSPCPGTCLSLNHPKDCPITLPCVEGCECQNGYILSGTSCVPLNQC). One can recognise a VWFC 3 domain in the interval 1323–1379 (GCTDFEGSYHLVRESWYTDNTCSRLCTCSLHNNITCRQTACKPGQQCWAVDGLLRCR). The VWFD 3 domain maps to 1384–1564 (GVCQVTGDSR…KDNNIDPNCQ (181 aa)). 2 disulfide bridges follow: Cys-1386–Cys-1525 and Cys-1408–Cys-1563. The tract at residues 1561–1588 (PNCQKSQEGKGKPQEEQGPSGSSKKASC) is disordered. Positions 1577–1586 (QGPSGSSKKA) are enriched in polar residues. Asn-1662 carries an N-linked (GlcNAc...) asparagine glycan. One can recognise a TIL 4 domain in the interval 1670–1726 (CPAYSTYTNCLPSCSPSCFDPDGRCEGARAPSSCAEGCTCQPGYVLSKNKCVAKDQC). Residues 1727–1782 (SCRDAQGGSIPSGKSWVSSGCSQKCACTEGSIQCRAFHCPSRSHCKLNSNGNSNCV) enclose the VWFC 4 domain. In terms of domain architecture, VWFD 4 spans 1787 to 1963 (DQCSIFGGPH…SWEVKTEDSV (177 aa)). Cys-1789 and Cys-1926 are joined by a disulfide. The N-linked (GlcNAc...) asparagine glycan is linked to Asn-1997. Residues 2076–2129 (CPANTVYQSCMTPCPESCANLAAPRDCEGPCVEGCASLPGYAFSGAQSLPLANC) form the TIL 5 domain. Residues 2130–2184 (GCTSNGIYYQLGHSFVTADCSQRCTCASSGVLLCEPFSCRPGESCTLGNLTRGCF) form the VWFC 5 domain. The N-linked (GlcNAc...) asparagine glycan is linked to Asn-2178. The EGF-like domain occupies 2185–2221 (RESPCLRNPCQNDGRCREQGTSFTCECEPGYGGHLCT). 3 cysteine pairs are disulfide-bonded: Cys-2189-Cys-2200, Cys-2194-Cys-2209, and Cys-2211-Cys-2220. Residues 2236-2256 (NLVAILLGMLVSLVVTVPVLA) form a helical membrane-spanning segment. Topologically, residues 2257–2282 (RKCVSRKRRRWREKTQSEPRSAPGRR) are cytoplasmic.

As to quaternary structure, probably forms covalent oligomers.

The protein resides in the cell membrane. Binds in a species-specific manner to the zona pellucida of the egg. May be involved in gamete recognition and/or signaling. In Oryctolagus cuniculus (Rabbit), this protein is Zonadhesin (ZAN).